A 75-amino-acid polypeptide reads, in one-letter code: MTKNFIVTLKKNTPDVEAKKFLDSVHHAGGSIVHEFDIIKGYTIKVPDVLHLNKLKEKHNDVIENVEEDKEVHTN.

The residue at position 74 (threonine 74) is a Phosphothreonine.

It belongs to the protease inhibitor I9 family. In terms of assembly, part of the heterodimeric LMA1 complex together with the thioredoxin II/TRX2. LMA1 binds to the ATPase SEC18.

Its subcellular location is the cytoplasm. Its function is as follows. Cytosolic inhibitor of vacuolar proteinase B (yscB), probably regulating protease B activity during limited proteolysis. PBI2 is a component of the LMA1 complex, which is involved in the facilitation of vesicle fusion such as homotypic vacuole and ER-derived COPII vesicle fusion with the Golgi. This chain is Protease B inhibitor 2 (PBI2), found in Saccharomyces cerevisiae (strain ATCC 204508 / S288c) (Baker's yeast).